The following is a 335-amino-acid chain: Phospho-N-acetylmuramoyl-pentapeptide-transferase (335 aa).

The next 10 membrane-spanning stretches (helical) occupy residues 3–23, 53–73, 78–98, 118–138, 143–163, 174–194, 200–220, 226–246, 251–271, and 314–334; these read LTIL…PHFI, GGTV…LVYF, SLGL…IGFL, FTFQ…PSGI, VFGY…FWVV, GIDG…GVIA, FDVL…FLFN, IFMG…ISIA, WTLL…MLQV, and VDAF…AILY.

Belongs to the glycosyltransferase 4 family. MraY subfamily. Requires Mg(2+) as cofactor.

The protein localises to the cell membrane. It carries out the reaction UDP-N-acetyl-alpha-D-muramoyl-L-alanyl-gamma-D-glutamyl-L-lysyl-D-alanyl-D-alanine + di-trans,octa-cis-undecaprenyl phosphate = Mur2Ac(oyl-L-Ala-gamma-D-Glu-L-Lys-D-Ala-D-Ala)-di-trans,octa-cis-undecaprenyl diphosphate + UMP. It participates in cell wall biogenesis; peptidoglycan biosynthesis. Its function is as follows. Catalyzes the initial step of the lipid cycle reactions in the biosynthesis of the cell wall peptidoglycan: transfers peptidoglycan precursor phospho-MurNAc-pentapeptide from UDP-MurNAc-pentapeptide onto the lipid carrier undecaprenyl phosphate, yielding undecaprenyl-pyrophosphoryl-MurNAc-pentapeptide, known as lipid I. This Streptococcus equi subsp. equi (strain 4047) protein is Phospho-N-acetylmuramoyl-pentapeptide-transferase.